A 104-amino-acid polypeptide reads, in one-letter code: Large ribosomal subunit protein uL24 (104 aa).

The protein belongs to the universal ribosomal protein uL24 family. In terms of assembly, part of the 50S ribosomal subunit.

In terms of biological role, one of two assembly initiator proteins, it binds directly to the 5'-end of the 23S rRNA, where it nucleates assembly of the 50S subunit. Its function is as follows. One of the proteins that surrounds the polypeptide exit tunnel on the outside of the subunit. In Pseudoalteromonas atlantica (strain T6c / ATCC BAA-1087), this protein is Large ribosomal subunit protein uL24.